Consider the following 409-residue polypeptide: Peptidase T (409 aa).

H78 is a binding site for Zn(2+). The active site involves D80. D140 serves as a coordination point for Zn(2+). The active-site Proton acceptor is the E174. 3 residues coordinate Zn(2+): E175, D197, and H379.

Belongs to the peptidase M20B family. Requires Zn(2+) as cofactor.

Its subcellular location is the cytoplasm. It catalyses the reaction Release of the N-terminal residue from a tripeptide.. Functionally, cleaves the N-terminal amino acid of tripeptides. The chain is Peptidase T from Aliivibrio salmonicida (strain LFI1238) (Vibrio salmonicida (strain LFI1238)).